We begin with the raw amino-acid sequence, 376 residues long: Chaperone protein DnaJ (376 aa).

Residues Asp-5–Gly-70 enclose the J domain. The segment at Gly-131–Ser-209 adopts a CR-type zinc-finger fold. Residues Cys-144, Cys-147, Cys-161, Cys-164, Cys-183, Cys-186, Cys-197, and Cys-200 each coordinate Zn(2+). CXXCXGXG motif repeat units lie at residues Cys-144–Gly-151, Cys-161–Gly-168, Cys-183–Gly-190, and Cys-197–Gly-204.

It belongs to the DnaJ family. In terms of assembly, homodimer. Zn(2+) serves as cofactor.

Its subcellular location is the cytoplasm. In terms of biological role, participates actively in the response to hyperosmotic and heat shock by preventing the aggregation of stress-denatured proteins and by disaggregating proteins, also in an autonomous, DnaK-independent fashion. Unfolded proteins bind initially to DnaJ; upon interaction with the DnaJ-bound protein, DnaK hydrolyzes its bound ATP, resulting in the formation of a stable complex. GrpE releases ADP from DnaK; ATP binding to DnaK triggers the release of the substrate protein, thus completing the reaction cycle. Several rounds of ATP-dependent interactions between DnaJ, DnaK and GrpE are required for fully efficient folding. Also involved, together with DnaK and GrpE, in the DNA replication of plasmids through activation of initiation proteins. This Shigella boydii serotype 18 (strain CDC 3083-94 / BS512) protein is Chaperone protein DnaJ.